Here is a 663-residue protein sequence, read N- to C-terminus: Bifunctional polymyxin resistance protein ArnA (663 aa).

Positions 1–307 (MSPKAVVFAY…EFGLVEGSQL (307 aa)) are formyltransferase ArnAFT. The Proton donor; for formyltransferase activity role is filled by His106. (6R)-10-formyltetrahydrofolate is bound by residues Arg116 and 138–142 (VKRAD). The interval 317–663 (RRTRVLILGV…EAMAEKADMR (347 aa)) is dehydrogenase ArnADH. NAD(+)-binding positions include Asp350 and 371 to 372 (DI). Residues Ala396, Tyr401, and 435–436 (TS) contribute to the UDP-alpha-D-glucuronate site. Glu437 acts as the Proton acceptor; for decarboxylase activity in catalysis. UDP-alpha-D-glucuronate-binding positions include Arg463, Asn494, 528–537 (RLVDGGAQKR), and Tyr615. The active-site Proton donor; for decarboxylase activity is Arg621.

In the N-terminal section; belongs to the Fmt family. UDP-L-Ara4N formyltransferase subfamily. It in the C-terminal section; belongs to the NAD(P)-dependent epimerase/dehydratase family. UDP-glucuronic acid decarboxylase subfamily. Homohexamer, formed by a dimer of trimers.

It carries out the reaction UDP-alpha-D-glucuronate + NAD(+) = UDP-beta-L-threo-pentopyranos-4-ulose + CO2 + NADH. The enzyme catalyses UDP-4-amino-4-deoxy-beta-L-arabinose + (6R)-10-formyltetrahydrofolate = UDP-4-deoxy-4-formamido-beta-L-arabinose + (6S)-5,6,7,8-tetrahydrofolate + H(+). Its pathway is nucleotide-sugar biosynthesis; UDP-4-deoxy-4-formamido-beta-L-arabinose biosynthesis; UDP-4-deoxy-4-formamido-beta-L-arabinose from UDP-alpha-D-glucuronate: step 1/3. It functions in the pathway nucleotide-sugar biosynthesis; UDP-4-deoxy-4-formamido-beta-L-arabinose biosynthesis; UDP-4-deoxy-4-formamido-beta-L-arabinose from UDP-alpha-D-glucuronate: step 3/3. The protein operates within bacterial outer membrane biogenesis; lipopolysaccharide biosynthesis. In terms of biological role, bifunctional enzyme that catalyzes the oxidative decarboxylation of UDP-glucuronic acid (UDP-GlcUA) to UDP-4-keto-arabinose (UDP-Ara4O) and the addition of a formyl group to UDP-4-amino-4-deoxy-L-arabinose (UDP-L-Ara4N) to form UDP-L-4-formamido-arabinose (UDP-L-Ara4FN). The modified arabinose is attached to lipid A and is required for resistance to polymyxin and cationic antimicrobial peptides. The protein is Bifunctional polymyxin resistance protein ArnA of Pseudomonas savastanoi pv. phaseolicola (strain 1448A / Race 6) (Pseudomonas syringae pv. phaseolicola (strain 1448A / Race 6)).